Consider the following 827-residue polypeptide: MEKAERRVNGPMAGQALEKLQSFFNRGTKLVTHHLHSLFFYKGFIYVVIGFLLGRAFILSEVLPFALPFFGAMLLIRRDKAFYAVLAVLAGALTISPKHSLLILAALLAFFVFSKVAAFITDDRVKALPIVVFFSMAAARAGFVYAQNGVFTTYDYVMAIVEAGLSFILTLIFLQSLPIFTVKKVKQSLKIEEIICFMILIASVLTGLAGLSYQGMQAEHILARYVVLSFSFIGGASIGCTVGVVTGLILGLANIGNLYQMSLLAFSGLLGGLLKEGKKAGAAIGLIVGSLLISLYGEGSAGLMTTLYESLIAVCLFLLTPQSITRKVARYIPGTVEHLQEQQQYARKIRDVTAQKVDQFSNVFHALSESFATFYQASDEQTDDSEVDLFLSKITEHSCQTCYKKNRCWVQNFDKTYDLMKQVMLETEEKEYASNRRLKKEFQQYCSKSKQVEELIEDELAHHHAHLTLKKKVQDSRRLVAEQLLGVSEVMADFSREIKREREQHFLQEEQIIEALQHFGIEIQHVEIYSLEQGNIDIEMTIPFSGHGESEKIIAPMLSDILEEQILVKAEQHSPHPNGYSHVAFGSTKSYRVSTGAAHAAKGGGLVSGDSYSMMELGARKYAAAISDGMGNGARAHFESNETIKLLEKILESGIDEKIAIKTINSILSLRTTDEIYSTLDLSIIDLQDASCKFLKVGSTPSFIKRGDQVMKVQASNLPIGIINEFDVEVVSEQLKAGDLLIMMSDGIFEGPKHVENHDLWMKRKMKGLKTNDPQEIADLLMEEVIRTRSGQIEDDMTVVVVRIDHNTPKWASIPVPAIFQNKQEIS.

10 consecutive transmembrane segments (helical) span residues 49–69, 71–91, 116–136, 142–162, 175–195, 206–226, 247–267, 269–289, 299–319, and 320–340; these read IGFL…ALPF, GAML…VLAG, VAAF…FFSM, GFVY…AIVE, QSLP…EEII, TGLA…ARYV, GLIL…LAFS, LLGG…LIVG, GSAG…LFLL, and TPQS…EHLQ. At 341–827 the chain is on the cytoplasmic side; the sequence is EQQQYARKIR…AIFQNKQEIS (487 aa). Residues 594–804 enclose the PPM-type phosphatase domain; the sequence is STGAAHAAKG…DDMTVVVVRI (211 aa).

The cofactor is Mn(2+).

Its subcellular location is the cell membrane. The enzyme catalyses O-phospho-L-seryl-[protein] + H2O = L-seryl-[protein] + phosphate. It catalyses the reaction O-phospho-L-threonyl-[protein] + H2O = L-threonyl-[protein] + phosphate. Functionally, normally needed for pro-sigma E processing during sporulation but can be bypassed in vegetative cells. Activates SpoIIAA by dephosphorylation. The sequence is that of Stage II sporulation protein E (spoIIE) from Bacillus subtilis (strain 168).